The sequence spans 209 residues: Imidazole glycerol phosphate synthase subunit HisH (209 aa).

Residues 1 to 205 (MIAIIDYGMG…KGVVKQWKSS (205 aa)) enclose the Glutamine amidotransferase type-1 domain. C79 (nucleophile) is an active-site residue. Active-site residues include H180 and E182.

In terms of assembly, heterodimer of HisH and HisF.

It is found in the cytoplasm. It catalyses the reaction 5-[(5-phospho-1-deoxy-D-ribulos-1-ylimino)methylamino]-1-(5-phospho-beta-D-ribosyl)imidazole-4-carboxamide + L-glutamine = D-erythro-1-(imidazol-4-yl)glycerol 3-phosphate + 5-amino-1-(5-phospho-beta-D-ribosyl)imidazole-4-carboxamide + L-glutamate + H(+). It carries out the reaction L-glutamine + H2O = L-glutamate + NH4(+). The protein operates within amino-acid biosynthesis; L-histidine biosynthesis; L-histidine from 5-phospho-alpha-D-ribose 1-diphosphate: step 5/9. In terms of biological role, IGPS catalyzes the conversion of PRFAR and glutamine to IGP, AICAR and glutamate. The HisH subunit catalyzes the hydrolysis of glutamine to glutamate and ammonia as part of the synthesis of IGP and AICAR. The resulting ammonia molecule is channeled to the active site of HisF. This chain is Imidazole glycerol phosphate synthase subunit HisH, found in Bacillus cytotoxicus (strain DSM 22905 / CIP 110041 / 391-98 / NVH 391-98).